A 565-amino-acid chain; its full sequence is uncharacterized protein (565 aa).

Transmembrane regions (helical) follow at residues 28–48 (IFHF…LPFA), 73–93 (ASYG…DTGL), 109–129 (VLAI…FLVW), 169–189 (LFLF…FYFI), 262–282 (IVIQ…YPVL), 315–335 (LIVT…VITS), 364–384 (SLIF…FGVI), 393–413 (VFPW…AMFI), 461–481 (AFLV…LLPL), and 526–546 (TLGL…LTFV).

This sequence belongs to the TrkH potassium transport family.

The protein localises to the cell membrane. This is an uncharacterized protein from Mycoplasma pneumoniae (strain ATCC 29342 / M129 / Subtype 1) (Mycoplasmoides pneumoniae).